The sequence spans 622 residues: E3 ubiquitin-protein ligase RNF12-A (622 aa).

Disordered regions lie at residues 1–26 (MESA…MDRL), 67–386 (RLQQ…ESER), and 473–514 (NANA…NSRG). The segment covering 11 to 21 (SIEQSESQRQS) has biased composition (low complexity). Composition is skewed to polar residues over residues 110 to 138 (SVRQ…NPNS) and 147 to 163 (INVN…SLDQ). Over residues 216–242 (RSPDQRRTRARTDRSRSPLHHAVDPPI) the composition is skewed to basic and acidic residues. Residues 247 to 256 (HSSSQTVDTS) are compositionally biased toward polar residues. Over residues 272–289 (SSQVQNSSSSNETEGSSR) the composition is skewed to low complexity. The segment covering 300–317 (VLGTEGQSQSTVHLSNPE) has biased composition (polar residues). Residues 318-331 (TRSSSQTPQTDSST) show a composition bias toward low complexity. The segment covering 332-341 (NAETTGTGQR) has biased composition (polar residues). Residues 355 to 365 (RPGDYRQRDSI) show a composition bias toward basic and acidic residues. Residues 366–382 (ANRTRSRSQTPNNTVTY) are compositionally biased toward polar residues. The RING-type; atypical zinc finger occupies 568 to 609 (CSVCITEYTEGNKLRKLPCSHEYHIHCIDRWLSENSTCPICR). Positions 619-622 (ESIV) match the PDZ-binding motif.

It belongs to the RNF12 family. As to quaternary structure, forms homodimers through the C-terminal region. The N-terminus interacts with the homeobox of LIM/homeobox factor lhx1/lim1, with lhx3/lim3 and lhx5/lim5, and with the N-terminus of ldb1. As to expression, shows overlapping expression with lhx1/lim1 and ldb1 in the gastrula mesoderm, and expression overlaps with ldb1 throughout early embryogenesis. After gastrulation, expression is gradually restricted to tissues originated from the ectoderm, the neuroectoderm, neural crest and epidermis, and subsequently to the neural tube as well as the head and tailbud region.

It localises to the nucleus. The enzyme catalyses S-ubiquitinyl-[E2 ubiquitin-conjugating enzyme]-L-cysteine + [acceptor protein]-L-lysine = [E2 ubiquitin-conjugating enzyme]-L-cysteine + N(6)-ubiquitinyl-[acceptor protein]-L-lysine.. Its pathway is protein modification; protein ubiquitination. In terms of biological role, acts as an E3 ubiquitin-protein ligase specific for ldb1, mediating ubiquitination and proteasome-dependent degradation of excess ldb1 in a RING-dependent manner. Does not degrade ldb1 bound to lhx1/lim1, nor lim1 itself and thus contributes to the establishment of proper ldb1-lhx1/lim1 stoichiometry and the formation of a ldb1-lhx1/lim1 complex. Interferes with Spemann organizer function and suppresses secondary axis formation induced by ldb1 and lhx1/lim1. This Xenopus laevis (African clawed frog) protein is E3 ubiquitin-protein ligase RNF12-A (rnf12-a).